A 63-amino-acid polypeptide reads, in one-letter code: Large ribosomal subunit protein eL37 (63 aa).

Zn(2+)-binding residues include C20, C23, C35, and C38. A C4-type zinc finger spans residues 20–38 (CRRCGRHSFNVRKGYCVAC).

This sequence belongs to the eukaryotic ribosomal protein eL37 family. Requires Zn(2+) as cofactor.

In terms of biological role, binds to the 23S rRNA. The protein is Large ribosomal subunit protein eL37 of Ignicoccus hospitalis (strain KIN4/I / DSM 18386 / JCM 14125).